The sequence spans 131 residues: Holo-[acyl-carrier-protein] synthase (131 aa).

2 residues coordinate Mg(2+): aspartate 8 and glutamate 63.

This sequence belongs to the P-Pant transferase superfamily. AcpS family. Requires Mg(2+) as cofactor.

The protein localises to the cytoplasm. It catalyses the reaction apo-[ACP] + CoA = holo-[ACP] + adenosine 3',5'-bisphosphate + H(+). Functionally, transfers the 4'-phosphopantetheine moiety from coenzyme A to a Ser of acyl-carrier-protein. The polypeptide is Holo-[acyl-carrier-protein] synthase (Shewanella pealeana (strain ATCC 700345 / ANG-SQ1)).